We begin with the raw amino-acid sequence, 454 residues long: SH2 domain-containing protein 4A (454 aa).

Disordered regions lie at residues 45–65, 107–131, 152–177, and 237–302; these read AMER…NGKS, EQEA…KSQY, KEEL…SSSS, and RKSK…AYPQ. The segment covering 107–120 has biased composition (basic and acidic residues); sequence EQEAEEPRKTHSEE. A phosphoserine mark is found at Ser118 and Ser124. Residues 240–259 are compositionally biased toward basic and acidic residues; sequence KAADEKRRSLAKQAREDYKR. Phosphoserine occurs at positions 261 and 315. Positions 347-440 constitute an SH2 domain; that stretch reads WFHGILTLKK…LGKELLLYPC (94 aa).

In terms of assembly, interacts with ESR1. As to expression, ubiquitously expressed. Aberrantly expressed in some cancers.

It localises to the cytoplasm. In terms of biological role, inhibits estrogen-induced cell proliferation by competing with PLCG for binding to ESR1, blocking the effect of estrogen on PLCG and repressing estrogen-induced proliferation. May play a role in T-cell development and function. The chain is SH2 domain-containing protein 4A (SH2D4A) from Homo sapiens (Human).